Reading from the N-terminus, the 247-residue chain is MIFDPPLQSGQLISRYKRFLTDVRLDNGEVITIHCANTGAMTGCADPGTRVWYSTSDNPKRKLPHSWEIAESPAGHFICVNTARANQIARELIEQGALAPLTGYARLRTEVKYGEENSRIDLLLEDDGKPDCYIEVKSVTLLDEREQPGMGYFPDAVTARGAKHLRELMVMKAAGHRAVLLFMVLHSGIVRMRPAAHIDPHYSLLIEQAITAGVEILCYRPHVGVQSMVAQDFIPFESCHLLPEGSE.

It belongs to the SfsA family.

The polypeptide is Sugar fermentation stimulation protein homolog (Aeromonas salmonicida (strain A449)).